Here is a 334-residue protein sequence, read N- to C-terminus: Putative 2-hydroxyacid dehydrogenase UNK4.10 (334 aa).

NAD(+) is bound by residues G166–I167, T244–R246, and D270. R246 is an active-site residue. E275 is a catalytic residue. Catalysis depends on H293, which acts as the Proton donor. Position 293-296 (H293–T296) interacts with NAD(+).

Belongs to the D-isomer specific 2-hydroxyacid dehydrogenase family.

This is Putative 2-hydroxyacid dehydrogenase UNK4.10 from Schizosaccharomyces pombe (strain 972 / ATCC 24843) (Fission yeast).